Consider the following 71-residue polypeptide: Small ribosomal subunit protein bS21 (71 aa).

This sequence belongs to the bacterial ribosomal protein bS21 family.

The polypeptide is Small ribosomal subunit protein bS21 (Chromohalobacter salexigens (strain ATCC BAA-138 / DSM 3043 / CIP 106854 / NCIMB 13768 / 1H11)).